The following is a 437-amino-acid chain: Adenylosuccinate synthetase (437 aa).

GTP contacts are provided by residues 12 to 18 (GDEGKGK) and 40 to 42 (GHT). D13 (proton acceptor) is an active-site residue. Mg(2+)-binding residues include D13 and G40. Residues 13–16 (DEGK), 38–41 (NAGH), T131, R145, Q226, T241, and R305 contribute to the IMP site. H41 (proton donor) is an active-site residue. 301–307 (ATTGRRR) is a substrate binding site. Residues R307, 333-335 (KLD), and 415-417 (SVG) each bind GTP.

This sequence belongs to the adenylosuccinate synthetase family. Homodimer. It depends on Mg(2+) as a cofactor.

Its subcellular location is the cytoplasm. It catalyses the reaction IMP + L-aspartate + GTP = N(6)-(1,2-dicarboxyethyl)-AMP + GDP + phosphate + 2 H(+). Its pathway is purine metabolism; AMP biosynthesis via de novo pathway; AMP from IMP: step 1/2. In terms of biological role, plays an important role in the de novo pathway of purine nucleotide biosynthesis. Catalyzes the first committed step in the biosynthesis of AMP from IMP. This is Adenylosuccinate synthetase from Desulfotalea psychrophila (strain LSv54 / DSM 12343).